The chain runs to 286 residues: Formamidopyrimidine-DNA glycosylase (286 aa).

Proline 2 acts as the Schiff-base intermediate with DNA in catalysis. The active-site Proton donor is the glutamate 3. Lysine 61 acts as the Proton donor; for beta-elimination activity in catalysis. Residues histidine 96, arginine 117, and lysine 160 each coordinate DNA. Residues aspartate 246 to arginine 280 form an FPG-type zinc finger. Catalysis depends on arginine 270, which acts as the Proton donor; for delta-elimination activity.

The protein belongs to the FPG family. Monomer. The cofactor is Zn(2+).

The catalysed reaction is Hydrolysis of DNA containing ring-opened 7-methylguanine residues, releasing 2,6-diamino-4-hydroxy-5-(N-methyl)formamidopyrimidine.. It catalyses the reaction 2'-deoxyribonucleotide-(2'-deoxyribose 5'-phosphate)-2'-deoxyribonucleotide-DNA = a 3'-end 2'-deoxyribonucleotide-(2,3-dehydro-2,3-deoxyribose 5'-phosphate)-DNA + a 5'-end 5'-phospho-2'-deoxyribonucleoside-DNA + H(+). In terms of biological role, involved in base excision repair of DNA damaged by oxidation or by mutagenic agents. Acts as a DNA glycosylase that recognizes and removes damaged bases. Has a preference for oxidized purines, such as 7,8-dihydro-8-oxoguanine (8-oxoG). Has AP (apurinic/apyrimidinic) lyase activity and introduces nicks in the DNA strand. Cleaves the DNA backbone by beta-delta elimination to generate a single-strand break at the site of the removed base with both 3'- and 5'-phosphates. The protein is Formamidopyrimidine-DNA glycosylase of Streptomyces avermitilis (strain ATCC 31267 / DSM 46492 / JCM 5070 / NBRC 14893 / NCIMB 12804 / NRRL 8165 / MA-4680).